We begin with the raw amino-acid sequence, 30 residues long: Kappa-sparatoxin-Hv1b (30 aa).

Cystine bridges form between C3–C17, C10–C22, and C16–C26. The residue at position 30 (W30) is a Tryptophan amide.

Belongs to the neurotoxin 10 (Hwtx-1) family. 19 (HpTX2) subfamily. As to expression, expressed by the venom gland.

The protein localises to the secreted. Its function is as follows. Inhibitor of voltage-gated potassium channels of the Kv4/KCND family. Inhibition of Kv4.3/KCND3 and Kv4.2/KCND2 is strongly voltage-dependent, while inhibition of Kv4.1/KCND1 shows less voltage-dependence. Its binding site may be near the potassium channel voltage sensor. Also blocks calcium channels. This chain is Kappa-sparatoxin-Hv1b, found in Heteropoda venatoria (Brown huntsman spider).